Consider the following 418-residue polypeptide: Serine hydroxymethyltransferase (418 aa).

Residues Leu120 and Gly124–Leu126 each bind (6S)-5,6,7,8-tetrahydrofolate. Lys229 carries the post-translational modification N6-(pyridoxal phosphate)lysine. A (6S)-5,6,7,8-tetrahydrofolate-binding site is contributed by Ser353–Phe355.

The protein belongs to the SHMT family. As to quaternary structure, homodimer. Pyridoxal 5'-phosphate serves as cofactor.

Its subcellular location is the cytoplasm. It carries out the reaction (6R)-5,10-methylene-5,6,7,8-tetrahydrofolate + glycine + H2O = (6S)-5,6,7,8-tetrahydrofolate + L-serine. The protein operates within one-carbon metabolism; tetrahydrofolate interconversion. It participates in amino-acid biosynthesis; glycine biosynthesis; glycine from L-serine: step 1/1. In terms of biological role, catalyzes the reversible interconversion of serine and glycine with tetrahydrofolate (THF) serving as the one-carbon carrier. This reaction serves as the major source of one-carbon groups required for the biosynthesis of purines, thymidylate, methionine, and other important biomolecules. Also exhibits THF-independent aldolase activity toward beta-hydroxyamino acids, producing glycine and aldehydes, via a retro-aldol mechanism. The chain is Serine hydroxymethyltransferase from Psychrobacter sp. (strain PRwf-1).